We begin with the raw amino-acid sequence, 342 residues long: Succinylglutamate desuccinylase (342 aa).

Zn(2+) contacts are provided by His63, Glu66, and His155. Residue Glu219 is part of the active site.

The protein belongs to the AspA/AstE family. Succinylglutamate desuccinylase subfamily. The cofactor is Zn(2+).

The enzyme catalyses N-succinyl-L-glutamate + H2O = L-glutamate + succinate. It participates in amino-acid degradation; L-arginine degradation via AST pathway; L-glutamate and succinate from L-arginine: step 5/5. Transforms N(2)-succinylglutamate into succinate and glutamate. The polypeptide is Succinylglutamate desuccinylase (Vibrio campbellii (strain ATCC BAA-1116)).